Consider the following 516-residue polypeptide: Putative transposase y4bL/y4kJ/y4tB (516 aa).

The HTH IS408-type domain occupies 15-96; it reads IRTILRLTHE…PDWALVVREL (82 aa). The 182-residue stretch at 138–319 folds into the Integrase catalytic domain; it reads FRNRHAAGAV…SRRELFEEIE (182 aa). Positions 493–516 are disordered; that stretch reads ERPQAEHAAPTPAHTNIRGRSYYQ.

The protein belongs to the transposase IS21/IS408/IS1162 family.

The chain is Putative transposase y4bL/y4kJ/y4tB from Sinorhizobium fredii (strain NBRC 101917 / NGR234).